Consider the following 320-residue polypeptide: Ferrochelatase (320 aa).

Fe cation contacts are provided by histidine 194 and glutamate 275.

It belongs to the ferrochelatase family. In terms of assembly, monomer.

It is found in the cytoplasm. It carries out the reaction heme b + 2 H(+) = protoporphyrin IX + Fe(2+). The protein operates within porphyrin-containing compound metabolism; protoheme biosynthesis; protoheme from protoporphyrin-IX: step 1/1. In terms of biological role, catalyzes the ferrous insertion into protoporphyrin IX. This is Ferrochelatase from Escherichia coli O9:H4 (strain HS).